The sequence spans 64 residues: DNA-directed RNA polymerase subunit Rpo10 (64 aa).

Zn(2+)-binding residues include Cys7, Cys10, Cys45, and Cys46.

It belongs to the archaeal Rpo10/eukaryotic RPB10 RNA polymerase subunit family. In terms of assembly, part of the RNA polymerase complex. Zn(2+) serves as cofactor.

It is found in the cytoplasm. It catalyses the reaction RNA(n) + a ribonucleoside 5'-triphosphate = RNA(n+1) + diphosphate. In terms of biological role, DNA-dependent RNA polymerase (RNAP) catalyzes the transcription of DNA into RNA using the four ribonucleoside triphosphates as substrates. The polypeptide is DNA-directed RNA polymerase subunit Rpo10 (Halorubrum lacusprofundi (strain ATCC 49239 / DSM 5036 / JCM 8891 / ACAM 34)).